Consider the following 221-residue polypeptide: MFGFHKPKMYRSIEGCCICRAKSSSSRFTDSKRYEKDFQSCFGLHETRSGDICNACVLLVKRWKKLPAGSKKNWNHVVDARAGPSLKTTLKPKKVKTLSGNRIKSNQISKLQKEFKRHNSDAHSTTSSASPAQSPCYSNQSDDGSDTEMASGSNRTPVFSFLDLTYWKRQKICCGIIYKGRFGEVLIDTHLFKPCCSNKKAAAEKPEEQGPEPLPISTQEW.

Basic and acidic residues predominate over residues 112-121; it reads QKEFKRHNSD. Disordered stretches follow at residues 112 to 152 and 201 to 221; these read QKEF…MASG and AAAE…TQEW. Over residues 124–135 the composition is skewed to low complexity; sequence STTSSASPAQSP. Polar residues predominate over residues 136-152; that stretch reads CYSNQSDDGSDTEMASG.

The protein belongs to the SINHCAF family. Interacts with the Sin3/HDAC corepressor complex at least composed of BRMS1, BRMS1L, ING2, SAP30, SAP30L and HDAC1. Found in a complex composed of at least SINHCAF, SIN3A, HDAC1, SAP30, RBBP4, OGT and TET1. Interacts with SIN3A and OGT.

Its subcellular location is the nucleus. Its function is as follows. Subunit of the Sin3 deacetylase complex (Sin3/HDAC), this subunit is important for the repression of genes encoding components of the TGF-beta signaling pathway. Core component of a SIN3A complex (composed of at least SINHCAF, SIN3A, HDAC1, SAP30, RBBP4, OGT and TET1) present in embryonic stem (ES) cells. Promotes the stability of SIN3A and its presence on chromatin and is essential for maintaining the potential of ES cells to proliferate rapidly, while ensuring a short G1-phase of the cell cycle, thereby preventing premature lineage priming. This Homo sapiens (Human) protein is SIN3-HDAC complex-associated factor.